We begin with the raw amino-acid sequence, 498 residues long: Flavin-dependent halogenase otaD (498 aa).

Residues Gly14, Gly17, and Glu47 each coordinate FAD. The chloride site is built by Ser326 and Gly327. FAD is bound at residue Val328.

The protein belongs to the flavin-dependent halogenase family.

It carries out the reaction ochratoxin B + FADH2 + chloride + O2 = ochratoxin A + FAD + 2 H2O. It participates in mycotoxin biosynthesis. Flavin-dependent halogenase; part of the gene cluster that mediates the biosynthesis of ochratoxin A (OTA), a mycotoxin composed of a chlorinated type I polyketide dihydroisocoumarin moiety linked to L-phenylalanine, and demonstrated to have nephrotoxic, immunotoxic, genotoxic, neurotoxic, and teratogenic properties. OtaD chlorinates ochratoxin B (OTB) at the C-5 position to form OTA. The pathway begins with the highly reducing polyketide synthase otaA that catalyzes the formation of the isocoumarin group during the initial stages of biosynthesis, starting from one acetate and 4 malonate units, to originate the characteristic pentaketide skeleton 7-methylmellein (7-MM) of the OTA molecule. The newly identified cyclase otaY might be involved in the polyketide cyclization reaction during the initial steps of the OTA biosynthesis. 7-MM is then oxidized into 7-carboxymellein (also called ochratoxin beta) by the cytochrome P450 monooxygenase otaC. The NRPS encoded by the otaB gene is involved in the linking of phenylalanine to the dihydroisocoumarin ring. The reaction catalyzed by NRPS results in the production of ochratoxin B (OTB), which is the non-chlorinated analog of OTA and which subsequently serves as the substrate of the halogenase otaD for chlorination activity to form the final molecular structure of OTA, containing a chlorine atom in the C-5 position of the molecule. This is Flavin-dependent halogenase otaD from Aspergillus carbonarius (strain ITEM 5010).